The chain runs to 213 residues: Cytochrome b6 (213 aa).

The helical transmembrane segment at 30–50 (IFYCLGGLTLLAFLVQCVTGL) threads the bilayer. C33 lines the heme c pocket. Positions 84 and 98 each coordinate heme b. 3 helical membrane-spanning segments follow: residues 88–108 (ANLMILLVFLHMLRVYYTGSF), 114–134 (LNWLAGCFLLVLSLGLAFTGY), and 184–204 (LHVMILPLVTIGFLVAHFIMI). H185 and H200 together coordinate heme b.

The protein belongs to the cytochrome b family. PetB subfamily. The subunits of the cytochrome bc complex are a Rieske Fe-S protein (PetC), cytochrome b6 (PetB), subunit IV (PetD), and a diheme cytochrome c (PetX). Heme b serves as cofactor. Requires heme c as cofactor.

It localises to the cell membrane. Component of the cytochrome bc complex which donates electrons to the photosynthetic reaction center. This chain is Cytochrome b6, found in Heliobacterium mobile (Heliobacillus mobilis).